Here is a 341-residue protein sequence, read N- to C-terminus: DNA-directed RNA polymerase subunit alpha (341 aa).

Residues 1-233 are alpha N-terminal domain (alpha-NTD); sequence MVREEVPVST…DLFIPFLHAE (233 aa). An alpha C-terminal domain (alpha-CTD) region spans residues 266 to 341; that stretch reads IILKRIFIDQ…LKNSNQFESR (76 aa).

The protein belongs to the RNA polymerase alpha chain family. In terms of assembly, in plastids the minimal PEP RNA polymerase catalytic core is composed of four subunits: alpha, beta, beta', and beta''. When a (nuclear-encoded) sigma factor is associated with the core the holoenzyme is formed, which can initiate transcription.

Its subcellular location is the plastid. It localises to the chloroplast. The catalysed reaction is RNA(n) + a ribonucleoside 5'-triphosphate = RNA(n+1) + diphosphate. Functionally, DNA-dependent RNA polymerase catalyzes the transcription of DNA into RNA using the four ribonucleoside triphosphates as substrates. This chain is DNA-directed RNA polymerase subunit alpha, found in Nymphaea alba (White water-lily).